We begin with the raw amino-acid sequence, 358 residues long: MGFRGKYFFPILMTLSLFLIIRYNYIVSDDPPLRQELPGRRSASSGDDITYTVKTPSKKTKRLFHTAVTATDSVYSTWQCRVMYYWYNRFRDEPGSDMGGYTRILHSGRPDGLMDEIPTFVADPLPSGVDKGYVVLNRPWAFVQWLQQAHIEEDYILMAEPDHIIVKPIPNLARGNLAAAFPFFYIEPKKYESVLRKFFPKENGPISRIDPIGNSPVIVTKNALMKIAPTWMNVSLAMKNDPQTDKAFGWVLEMYAYAVSSALHGVSNILHKDFMIQPPWDTETKKTFIIHYTYGCDFDMKGKMMVGKIGEWRFDKRSYGDKPPPRNLTLPPRGVPESVVTLVTMINEATANIPNWES.

Residues 7-26 (YFFPILMTLSLFLIIRYNYI) form a helical; Signal-anchor membrane-spanning segment.

In terms of tissue distribution, ubiquitous.

It localises to the golgi apparatus. Its subcellular location is the cis-Golgi network membrane. The enzyme catalyses trans-4-hydroxy-L-prolyl-[protein] + UDP-beta-L-arabinofuranose = O-(beta-L-arabinofuranosyl)-trans-4-hydroxy-L-prolyl-[protein] + UDP + H(+). Functionally, glycosyltransferase involved in the O-arabinosylation of several proteins including extensins and small signaling peptides. Catalyzes the transfer of the initial L-arabinose to the hydroxyl group of Hyp residues. Contributes redundantly with HPAT1 and HPAT3 to arabinosylation of EXT3. This chain is Hydroxyproline O-arabinosyltransferase 2, found in Arabidopsis thaliana (Mouse-ear cress).